Reading from the N-terminus, the 255-residue chain is Diphthine synthase (255 aa).

S-adenosyl-L-methionine contacts are provided by residues Leu9, Asp85, Val88, 113–114 (SI), Leu164, Ala207, and His232.

The protein belongs to the diphthine synthase family. Homodimer.

It catalyses the reaction 2-[(3S)-amino-3-carboxypropyl]-L-histidyl-[translation elongation factor 2] + 3 S-adenosyl-L-methionine = diphthine-[translation elongation factor 2] + 3 S-adenosyl-L-homocysteine + 3 H(+). It functions in the pathway protein modification; peptidyl-diphthamide biosynthesis. In terms of biological role, S-adenosyl-L-methionine-dependent methyltransferase that catalyzes the trimethylation of the amino group of the modified target histidine residue in translation elongation factor 2 (EF-2), to form an intermediate called diphthine. The three successive methylation reactions represent the second step of diphthamide biosynthesis. The protein is Diphthine synthase of Methanococcus maripaludis (strain DSM 14266 / JCM 13030 / NBRC 101832 / S2 / LL).